The sequence spans 148 residues: UPF0756 membrane protein Ent638_1667 (148 aa).

The next 4 helical transmembrane spans lie at 14 to 34, 51 to 71, 86 to 106, and 121 to 141; these read ALGFISHNTTVAISILVLIIV, LTIGIIILTIGVMAPIASGTL, LIAIAVGVFVSWLGGRGVTLM, and VLGVALFRGVPVGPLIAAGLV.

The protein belongs to the UPF0756 family.

The protein localises to the cell membrane. The polypeptide is UPF0756 membrane protein Ent638_1667 (Enterobacter sp. (strain 638)).